We begin with the raw amino-acid sequence, 586 residues long: Monoterpene synthase TPS4, chloroplastic (586 aa).

A chloroplast-targeting transit peptide spans 1–47; that stretch reads MAATRNLSLLAQSSQPWAGIYGSHGSPRPISSWLRRQSIAKTSYICM. 5 residues coordinate Mg(2+): Asp-340, Asp-344, Asp-485, Thr-489, and Glu-493. Positions 340–344 match the DDXXD motif motif; it reads DDIFD.

Belongs to the terpene synthase family. Tpsg subfamily. In terms of assembly, monomer. Mg(2+) is required as a cofactor.

It is found in the plastid. Its subcellular location is the chloroplast. The catalysed reaction is (2E)-geranyl diphosphate + H2O = (2E)-geraniol + diphosphate. It functions in the pathway secondary metabolite biosynthesis; terpenoid biosynthesis. Its function is as follows. Monoterpene synthase involved in the biosynthesis of volatile organic compounds. Mediates the conversion of (2E)-geranyl diphosphate (GPP) into the acyclic monoterpene, geraniol. Does not use (2E,6E)-farnesyl diphosphate (FPP) as substrate. The polypeptide is Monoterpene synthase TPS4, chloroplastic (Cananga odorata (Ylang-ylang tree)).